We begin with the raw amino-acid sequence, 410 residues long: LL-diaminopimelate aminotransferase (410 aa).

2 residues coordinate substrate: Tyr15 and Gly42. Residues Tyr72, 108–109, Tyr132, Asn187, Tyr218, and 246–248 each bind pyridoxal 5'-phosphate; these read AK and SFS. The substrate site is built by Lys109, Tyr132, and Asn187. Residue Lys249 is modified to N6-(pyridoxal phosphate)lysine. The pyridoxal 5'-phosphate site is built by Arg257 and Asn292. Residues Asn292 and Arg388 each coordinate substrate.

This sequence belongs to the class-I pyridoxal-phosphate-dependent aminotransferase family. LL-diaminopimelate aminotransferase subfamily. As to quaternary structure, homodimer. It depends on pyridoxal 5'-phosphate as a cofactor.

The catalysed reaction is (2S,6S)-2,6-diaminopimelate + 2-oxoglutarate = (S)-2,3,4,5-tetrahydrodipicolinate + L-glutamate + H2O + H(+). It participates in amino-acid biosynthesis; L-lysine biosynthesis via DAP pathway; LL-2,6-diaminopimelate from (S)-tetrahydrodipicolinate (aminotransferase route): step 1/1. In terms of biological role, involved in the synthesis of meso-diaminopimelate (m-DAP or DL-DAP), required for both lysine and peptidoglycan biosynthesis. Catalyzes the direct conversion of tetrahydrodipicolinate to LL-diaminopimelate. Can also use m-DAP instead of LL-DAP as the amino-group donor. The protein is LL-diaminopimelate aminotransferase of Acetivibrio thermocellus (strain ATCC 27405 / DSM 1237 / JCM 9322 / NBRC 103400 / NCIMB 10682 / NRRL B-4536 / VPI 7372) (Clostridium thermocellum).